We begin with the raw amino-acid sequence, 152 residues long: Flagellar assembly factor FliW (152 aa).

The protein belongs to the FliW family. Interacts with translational regulator CsrA and flagellin(s).

It localises to the cytoplasm. Functionally, acts as an anti-CsrA protein, binds CsrA and prevents it from repressing translation of its target genes, one of which is flagellin. Binds to flagellin and participates in the assembly of the flagellum. This chain is Flagellar assembly factor FliW, found in Caldicellulosiruptor bescii (strain ATCC BAA-1888 / DSM 6725 / KCTC 15123 / Z-1320) (Anaerocellum thermophilum).